A 424-amino-acid polypeptide reads, in one-letter code: Appressorium protein ROW1 (424 aa).

Positions methionine 1 to alanine 21 are cleaved as a signal peptide. Disordered regions lie at residues alanine 19–lysine 54, alanine 69–threonine 90, serine 278–valine 304, and serine 327–alanine 398. Topologically, residues glutamine 22–serine 403 are extracellular. Over residues threonine 37–lysine 54 the composition is skewed to polar residues. Composition is skewed to low complexity over residues alanine 295–valine 304 and serine 327–serine 347. A compositionally biased stretch (gly residues) spans serine 362–serine 382. Over residues serine 383 to alanine 398 the composition is skewed to low complexity. Residues serine 404–leucine 424 traverse the membrane as a helical segment.

The protein resides in the cell membrane. It localises to the secreted. Functionally, plays a role in the formation of the appressorium, a specialized infection structure with the purpose of penetrating the host surface, and is required for proper remodeling of the appressorium wall and vesicle secretion. The protein is Appressorium protein ROW1 of Mycosarcoma maydis (Corn smut fungus).